The chain runs to 365 residues: Cyclin-D5-2 (365 aa).

This sequence belongs to the cyclin family. Cyclin D subfamily.

The polypeptide is Cyclin-D5-2 (CYCD5-2) (Oryza sativa subsp. japonica (Rice)).